The primary structure comprises 129 residues: Thioredoxin H7 (129 aa).

Residues 6 to 129 form the Thioredoxin domain; the sequence is SSVHDVHSSM…LVKKIEQHRV (124 aa). Catalysis depends on nucleophile residues Cys55 and Cys58. Cys55 and Cys58 are disulfide-bonded.

It belongs to the thioredoxin family. Plant H-type subfamily.

It localises to the cytoplasm. Functionally, probable thiol-disulfide oxidoreductase that may be involved in the redox regulation of a number of cytosolic enzymes. The polypeptide is Thioredoxin H7 (TRX7) (Arabidopsis thaliana (Mouse-ear cress)).